Here is a 260-residue protein sequence, read N- to C-terminus: Adenosylcobinamide-GDP ribazoletransferase (260 aa).

Helical transmembrane passes span 3 to 23, 36 to 56, 60 to 80, 108 to 128, 133 to 153, 180 to 200, 206 to 226, and 239 to 259; these read APLW…LPAW, FAPW…LVLI, WPTS…SGGL, VGAS…ASLL, LAPL…LWAM, ALPA…LMIV, MVLM…PELL, and GASV…LLPA.

It belongs to the CobS family. The cofactor is Mg(2+).

The protein resides in the cell inner membrane. It carries out the reaction alpha-ribazole + adenosylcob(III)inamide-GDP = adenosylcob(III)alamin + GMP + H(+). The catalysed reaction is alpha-ribazole 5'-phosphate + adenosylcob(III)inamide-GDP = adenosylcob(III)alamin 5'-phosphate + GMP + H(+). It functions in the pathway cofactor biosynthesis; adenosylcobalamin biosynthesis; adenosylcobalamin from cob(II)yrinate a,c-diamide: step 7/7. Functionally, joins adenosylcobinamide-GDP and alpha-ribazole to generate adenosylcobalamin (Ado-cobalamin). Also synthesizes adenosylcobalamin 5'-phosphate from adenosylcobinamide-GDP and alpha-ribazole 5'-phosphate. The protein is Adenosylcobinamide-GDP ribazoletransferase of Prochlorococcus marinus (strain MIT 9313).